A 255-amino-acid chain; its full sequence is 3-oxoacyl-[acyl-carrier-protein] reductase MabA (255 aa).

Residues 32–35, arginine 55, 69–70, glycine 98, tyrosine 161, lysine 165, isoleucine 194, and arginine 205 each bind NADP(+); these read NRGI and DV. The active-site Proton acceptor is the tyrosine 161.

The protein belongs to the short-chain dehydrogenases/reductases (SDR) family. Homotetramer.

It localises to the secreted. It is found in the cell wall. The enzyme catalyses a (3R)-hydroxyacyl-[ACP] + NADP(+) = a 3-oxoacyl-[ACP] + NADPH + H(+). The catalysed reaction is a (3R)-3-hydroxyacyl-CoA + NADP(+) = a 3-oxoacyl-CoA + NADPH + H(+). It carries out the reaction (3R)-3-hydroxybutanoyl-CoA + NADP(+) = acetoacetyl-CoA + NADPH + H(+). It catalyses the reaction (3R)-hydroxyoctanoyl-CoA + NADP(+) = 3-oxooctanoyl-CoA + NADPH + H(+). The protein operates within lipid metabolism; mycolic acid biosynthesis. Its function is as follows. Part of the mycobacterial fatty acid elongation system FAS-II, which is involved in mycolic acid biosynthesis. Catalyzes the NADPH-dependent reduction of beta-ketoacyl derivatives, the second step of the FAS-II elongation cycle. Has a preference for longer substrates. Can use CoA derivatives as substrates in vitro. This Mycolicibacterium smegmatis (strain ATCC 700084 / mc(2)155) (Mycobacterium smegmatis) protein is 3-oxoacyl-[acyl-carrier-protein] reductase MabA.